A 643-amino-acid polypeptide reads, in one-letter code: E3 ubiquitin-protein ligase Praja-1 (643 aa).

The interval 1-363 (MGQESSKPVW…SDDYYKYCDE (363 aa)) is disordered. 3 stretches are compositionally biased toward basic and acidic residues: residues 95-105 (DYSRYPPREYR), 145-158 (KFKD…EKGA), and 173-183 (RDVREERDKLD). A compositionally biased stretch (low complexity) spans 200–209 (QSSVASQSSS). A compositionally biased stretch (basic and acidic residues) spans 213 to 227 (LATKGDSSERERREQ). A Phosphoserine modification is found at Ser265. Thr277 bears the Phosphothreonine mark. Basic and acidic residues-rich tracts occupy residues 289-310 (RWRD…RGRG) and 320-362 (KYPE…KYCD). Phosphoserine is present on residues Ser365 and Ser367. The segment at 380–454 (RSREQTLSSS…REPSLQEEQA (75 aa)) is disordered. Positions 410–439 (SASTGTSPGPGASASAGAGAGASAGSNGSN) are enriched in low complexity. The RING-type zinc finger occupies 595–636 (CPICCSEYVKGEVATELPCHHYFHKPCVSIWLQKSGTCPVCR).

Binds ubiquitin-conjugating enzymes (E2s). In vitro, interacts with the ubiquitin-conjugating enzyme, UBE2D2. Substrate for E2-dependent ubiquitination. As to expression, expressed in various regions of the brain including the cerebellum, cerebral cortex, medulla, occipital pole, frontal lobe, temporal lobe and putamen. Highest levels in the cerebral cortex.

It catalyses the reaction S-ubiquitinyl-[E2 ubiquitin-conjugating enzyme]-L-cysteine + [acceptor protein]-L-lysine = [E2 ubiquitin-conjugating enzyme]-L-cysteine + N(6)-ubiquitinyl-[acceptor protein]-L-lysine.. Has E2-dependent E3 ubiquitin-protein ligase activity. Ubiquitinates MAGED1 antigen leading to its subsequent degradation by proteasome. May be involved in protein sorting. This Homo sapiens (Human) protein is E3 ubiquitin-protein ligase Praja-1 (PJA1).